The primary structure comprises 262 residues: Serine O-acetyltransferase (262 aa).

Catalysis depends on Cys107, which acts as the Acyl-thioester intermediate. Residue Lys128 coordinates substrate. His200 acts as the Proton acceptor in catalysis. The active site involves Glu202. Substrate is bound at residue Arg214.

Belongs to the MetA family.

It localises to the cytoplasm. The enzyme catalyses L-serine + acetyl-CoA = O-acetyl-L-serine + CoA. The catalysed reaction is L-homoserine + acetyl-CoA = O-acetyl-L-homoserine + CoA. It participates in amino-acid biosynthesis; L-cysteine biosynthesis; L-cysteine from L-serine: step 1/2. Its function is as follows. Transfers an acetyl group from acetyl-CoA to L-serine, forming acetyl-L-serine. In vitro, also has homoserine acetyl transferase activity. The polypeptide is Serine O-acetyltransferase (Lactobacillus acidophilus).